The sequence spans 385 residues: MVRFTSFTSPFSAILLLSFGINKVATASTNTCVVAKSDSDDAITILEAFEKCKTGGTVVFPKDSTYNLNSIVTTSGLKNVNINLAGTINLPVREESYRNGDYYIQIKGTNIKMYGGGTINGNGQAWWDALDRTAPSVLRIAANDSSFGNFNIINSPRAHLNVTNSTNLLLHDFIIHTVSNNSNPAKNTDALDLYHSSGVIFRDSDLTIGDDCLAVKENVTKVTVSNITCRGGHGYSIGSLGMGGRRDFVTQVNVYNSTCIDCQNGVRVKTWAGGKGFVEDINFTDIYLEKAENPIIITTHYCDKNEMGYCNNNYETSLDIAGVHFKNIHGSGSDKGKPIINLNCSTESPCSDVTLTNINISKASNNTKNVCVNLKGSDKIPECSS.

Residues 1–26 (MVRFTSFTSPFSAILLLSFGINKVAT) form the signal peptide. 4 N-linked (GlcNAc...) asparagine glycosylation sites follow: N143, N161, N164, and N180. A PbH1 1 repeat occupies 165-195 (STNLLLHDFIIHTVSNNSNPAKNTDALDLYH). D210 functions as the Proton donor in the catalytic mechanism. C212 and C229 are oxidised to a cystine. N218 and N226 each carry an N-linked (GlcNAc...) asparagine glycan. PbH1 repeat units lie at residues 219–241 (VTKV…GSLG), 249–270 (VTQV…RVKT), and 278–299 (VEDI…IITT). H233 is an active-site residue. N256, N282, and N343 each carry an N-linked (GlcNAc...) asparagine glycan. C344 and C350 are joined by a disulfide. One copy of the PbH1 5 repeat lies at 350-376 (CSDVTLTNINISKASNNTKNVCVNLKG). N359 and N365 each carry an N-linked (GlcNAc...) asparagine glycan.

The protein belongs to the glycosyl hydrolase 28 family. Post-translationally, N-glycosylated.

The protein resides in the secreted. The catalysed reaction is [(1-&gt;4)-alpha-D-galacturonosyl](n) + H2O = alpha-D-galacturonate + [(1-&gt;4)-alpha-D-galacturonosyl](n-1). Its function is as follows. Specific in hydrolyzing the terminal glycosidic bond of polygalacturonic acid and oligogalacturonates. This chain is Exopolygalacturonase rpg16, found in Rhizopus delemar (strain RA 99-880 / ATCC MYA-4621 / FGSC 9543 / NRRL 43880) (Mucormycosis agent).